A 334-amino-acid chain; its full sequence is Phosphoribosylformylglycinamidine cyclo-ligase (334 aa).

This sequence belongs to the AIR synthase family.

Its subcellular location is the cytoplasm. It catalyses the reaction 2-formamido-N(1)-(5-O-phospho-beta-D-ribosyl)acetamidine + ATP = 5-amino-1-(5-phospho-beta-D-ribosyl)imidazole + ADP + phosphate + H(+). The protein operates within purine metabolism; IMP biosynthesis via de novo pathway; 5-amino-1-(5-phospho-D-ribosyl)imidazole from N(2)-formyl-N(1)-(5-phospho-D-ribosyl)glycinamide: step 2/2. The chain is Phosphoribosylformylglycinamidine cyclo-ligase from Thermococcus gammatolerans (strain DSM 15229 / JCM 11827 / EJ3).